The sequence spans 874 residues: Tyrosine-protein kinase receptor TYRO3 (874 aa).

The signal sequence occupies residues 1 to 20 (MEVSLCILLFLLHFNEGIHG). 2 Ig-like C2-type domains span residues 21 to 106 (VRFT…IISS) and 117 to 198 (PHFG…GTVH). Topologically, residues 21-411 (VRFTQKPFHQ…QAQTQRGHMW (391 aa)) are extracellular. Cys-42 and Cys-95 are oxidised to a cystine. Asn-135, Asn-174, Asn-217, Asn-270, Asn-305, and Asn-373 each carry an N-linked (GlcNAc...) asparagine glycan. Cysteines 138 and 181 form a disulfide. 2 consecutive Fibronectin type-III domains span residues 202-297 (RPDS…TPQA) and 299-403 (PSAA…AMQA). The chain crosses the membrane as a helical span at residues 412 to 432 (VGLLFGLLVATMVGLLLIVLI). The Cytoplasmic portion of the chain corresponds to 433 to 874 (RNRGKETQFG…EEEEDVIINV (442 aa)). Residues 497–768 (LTLGRMLGKG…QHLIDQLELL (272 aa)) enclose the Protein kinase domain. ATP-binding positions include 503-511 (LGKGEFGSV) and Lys-529. Asp-634 acts as the Proton acceptor in catalysis. Tyr-665 carries the phosphotyrosine; by autocatalysis modification.

It belongs to the protein kinase superfamily. Tyr protein kinase family. AXL/UFO subfamily.

The protein localises to the cell membrane. It catalyses the reaction L-tyrosyl-[protein] + ATP = O-phospho-L-tyrosyl-[protein] + ADP + H(+). Functionally, may be involved in cell adhesion processes, particularly in the central nervous system. The protein is Tyrosine-protein kinase receptor TYRO3 (tyro3) of Danio rerio (Zebrafish).